The chain runs to 578 residues: Sulfite reductase [NADPH] hemoprotein beta-component (578 aa).

The interval 1–21 (MTNTLAGPDRSRDISQPLEKL) is disordered. Positions 443, 449, 488, and 492 each coordinate [4Fe-4S] cluster. Cysteine 492 provides a ligand contact to siroheme.

Belongs to the nitrite and sulfite reductase 4Fe-4S domain family. In terms of assembly, alpha(8)-beta(8). The alpha component is a flavoprotein, the beta component is a hemoprotein. It depends on siroheme as a cofactor. The cofactor is [4Fe-4S] cluster.

It catalyses the reaction hydrogen sulfide + 3 NADP(+) + 3 H2O = sulfite + 3 NADPH + 4 H(+). The protein operates within sulfur metabolism; hydrogen sulfide biosynthesis; hydrogen sulfide from sulfite (NADPH route): step 1/1. Its function is as follows. Component of the sulfite reductase complex that catalyzes the 6-electron reduction of sulfite to sulfide. This is one of several activities required for the biosynthesis of L-cysteine from sulfate. The chain is Sulfite reductase [NADPH] hemoprotein beta-component from Methylocella silvestris (strain DSM 15510 / CIP 108128 / LMG 27833 / NCIMB 13906 / BL2).